A 336-amino-acid chain; its full sequence is DNA repair protein XRCC4 (336 aa).

The interval 1-213 is interaction with IFFO1; that stretch reads MERKISRIHL…EREKDIKQEG (213 aa). Residue serine 53 is modified to Phosphoserine; by PRKDC. Coiled-coil stretches lie at residues 131-165 and 184-212; these read LDTIAENQAKNEHLQKENERLLRDWNDVQGRFEKC and LNEKKTKIRSLHNKLLNAAQEREKDIKQE. The segment at 180-213 is interaction with LIG4; the sequence is FILVLNEKKTKIRSLHNKLLNAAQEREKDIKQEG. Serine 193 carries the post-translational modification Phosphoserine; by PRKDC. Lysine 210 is covalently cross-linked (Glycyl lysine isopeptide (Lys-Gly) (interchain with G-Cter in SUMO)). The interval 212–249 is disordered; the sequence is EGETAICSEMTADRDPVYDESTDEESENQTDLSGLASA. The residue at position 229 (tyrosine 229) is a Phosphotyrosine. Residues 229–239 show a composition bias toward acidic residues; it reads YDESTDEESEN. The residue at position 232 (serine 232) is a Phosphoserine. Position 233 is a phosphothreonine; by CK2 (threonine 233). Serine 237 and serine 256 each carry phosphoserine. Serine 260 is modified (phosphoserine; by PRKDC). Residues 264-336 are disordered; that stretch reads TDIAPSRKRR…SSPEDLFDEI (73 aa). Positions 270–275 match the Nuclear localization signal motif; the sequence is RKRRQR. Residue lysine 296 forms a Glycyl lysine isopeptide (Lys-Gly) (interchain with G-Cter in ubiquitin) linkage. 4 positions are modified to phosphoserine; by PRKDC: serine 303, serine 304, serine 315, and serine 320. Over residues 317-329 the composition is skewed to polar residues; that stretch reads ENMSLETLRNSSP. A Phosphothreonine; by PRKDC modification is found at threonine 323. Phosphoserine; by PRKDC is present on residues serine 327 and serine 328.

The protein belongs to the XRCC4-XLF family. XRCC4 subfamily. In terms of assembly, homodimer and homotetramer in solution. Interacts with NHEJ1/XLF; the interaction is direct and is mediated via a head-to-head interaction between N-terminal head regions. Interacts with LIG4; the LIG4-XRCC4 subcomplex has a 1:2 stoichiometry and XRCC4 is required for LIG4 stability. Component of the core long-range non-homologous end joining (NHEJ) complex (also named DNA-PK complex) composed of PRKDC, LIG4, XRCC4, XRCC6/Ku70, XRCC5/Ku86 and NHEJ1/XLF. Additional component of the NHEJ complex includes PAXX. Following autophosphorylation, PRKDC dissociates from DNA, leading to formation of the short-range NHEJ complex, composed of LIG4, XRCC4, XRCC6/Ku70, XRCC5/Ku86 and NHEJ1/XLF. Interacts with PRKDC; the interaction is direct. Interacts with XRCC6/Ku70; the interaction is direct. Interacts with APTX and APLF. Forms a heterotetramer with IFFO1; the interaction involves LIG4-free XRCC4 and leads to the relocalization of IFFO1 to the sites of DNA damage. Interacts with PNKP; mainly interacts with PNKP when phosphorylated at Thr-233, but is also able to interact at much lower level with PNKP when not unphosphorylated. Interacts with POLL (DNA polymerase lambda). Interacts with XKR4; interacts with the processed form of XKR4, which is cleaved by caspase. Phosphorylated by PRKDC at the C-terminus in response to DNA damage; Ser-260 and Ser-320 constitute the main phosphorylation sites. Phosphorylations by PRKDC at the C-terminus of XRCC4 and NHEJ1/XLF are highly redundant and regulate ability of the XRCC4-NHEJ1/XLF subcomplex to bridge DNA. Phosphorylation by PRKDC does not prevent interaction with NHEJ1/XLF but disrupts ability to bridge DNA and promotes detachment from DNA. Phosphorylation at Ser-327 and Ser-328 by PRKDC promotes recognition by the SCF(FBXW7) complex and subsequent ubiquitination via 'Lys-63'-linked ubiquitin. Phosphorylation at Thr-233 by CK2 promotes interaction with PNKP; regulating PNKP activity and localization to DNA damage sites. Phosphorylation by CK2 promotes interaction with APTX. Post-translationally, ubiquitinated at Lys-296 by the SCF(FBXW7) complex via 'Lys-63'-linked ubiquitination, thereby promoting double-strand break repair: the SCF(FBXW7) complex specifically recognizes XRCC4 when phosphorylated at Ser-327 and Ser-328 by PRKDC, and 'Lys-63'-linked ubiquitination facilitates DNA non-homologous end joining (NHEJ) by enhancing association with XRCC5/Ku80 and XRCC6/Ku70. Monoubiquitinated. In terms of processing, undergoes proteolytic processing by caspase-3 (CASP3). This generates the protein XRCC4, C-terminus (XRCC4/C), which translocates to the cytoplasm and activates phospholipid scramblase activity of XKR4, thereby promoting phosphatidylserine exposure on apoptotic cell surface. Widely expressed.

Its subcellular location is the nucleus. The protein resides in the chromosome. The protein localises to the cytoplasm. Its function is as follows. DNA non-homologous end joining (NHEJ) core factor, required for double-strand break repair and V(D)J recombination. Acts as a scaffold protein that regulates recruitment of other proteins to DNA double-strand breaks (DSBs). Associates with NHEJ1/XLF to form alternating helical filaments that bridge DNA and act like a bandage, holding together the broken DNA until it is repaired. The XRCC4-NHEJ1/XLF subcomplex binds to the DNA fragments of a DSB in a highly diffusive manner and robustly bridges two independent DNA molecules, holding the broken DNA fragments in close proximity to one other. The mobility of the bridges ensures that the ends remain accessible for further processing by other repair factors. Plays a key role in the NHEJ ligation step of the broken DNA during DSB repair via direct interaction with DNA ligase IV (LIG4): the LIG4-XRCC4 subcomplex reseals the DNA breaks after the gap filling is completed. XRCC4 stabilizes LIG4, regulates its subcellular localization and enhances LIG4's joining activity. Binding of the LIG4-XRCC4 subcomplex to DNA ends is dependent on the assembly of the DNA-dependent protein kinase complex DNA-PK to these DNA ends. Promotes displacement of PNKP from processed strand break termini. Functionally, acts as an activator of the phospholipid scramblase activity of XKR4. This form, which is generated upon caspase-3 (CASP3) cleavage, translocates into the cytoplasm and interacts with XKR4, thereby promoting phosphatidylserine scramblase activity of XKR4 and leading to phosphatidylserine exposure on apoptotic cell surface. This is DNA repair protein XRCC4 from Homo sapiens (Human).